We begin with the raw amino-acid sequence, 237 residues long: Type II secretion system protein J (237 aa).

A propeptide spans 1-6 (leader sequence); that stretch reads MRLQRG. At phenylalanine 7 the chain carries N-methylphenylalanine. Residues 7-29 traverse the membrane as a helical segment; sequence FTLLELLIAIAIFALLALATYRM. Residues 203-237 form a disordered region; it reads PLKQDQPQGQPGGENGENGEGGVPQPPEGMPGAPE. Residues 212–224 are compositionally biased toward gly residues; that stretch reads QPGGENGENGEGG. Positions 226-237 are enriched in pro residues; the sequence is PQPPEGMPGAPE.

The protein belongs to the GSP J family. In terms of assembly, type II secretion is composed of four main components: the outer membrane complex, the inner membrane complex, the cytoplasmic secretion ATPase and the periplasm-spanning pseudopilus. Forms the tip of the type II pseudopilus by interacting with XcpV, XcpU and XcpX. Interacts with core component XcpT. Cleaved by prepilin peptidase. Post-translationally, methylated by prepilin peptidase at the amino group of the N-terminal phenylalanine once the leader sequence is cleaved by prepilin peptidase.

It localises to the cell inner membrane. In terms of biological role, component of the type II secretion system required for the energy-dependent secretion of extracellular factors such as proteases and toxins from the periplasm. Part of the pseudopilus tip complex that is critical for the recognition and binding of secretion substrates. Type II pseudopilus confers increased bacterial adhesive capabilities. In Pseudomonas aeruginosa (strain ATCC 15692 / DSM 22644 / CIP 104116 / JCM 14847 / LMG 12228 / 1C / PRS 101 / PAO1), this protein is Type II secretion system protein J (xcpW).